The chain runs to 84 residues: Hepcidin (84 aa).

The first 24 residues, 1-24, serve as a signal peptide directing secretion; the sequence is MALSSQIWAACLLLLLLLASLTSG. A propeptide spanning residues 25–54 is cleaved from the precursor; the sequence is SVFPQQTGQLAELQPQDRAGARAGWTPMLQ. Intrachain disulfides connect cysteine 69/cysteine 72, cysteine 70/cysteine 78, and cysteine 73/cysteine 81.

It belongs to the hepcidin family. Interacts with SLC40A1; this interaction promotes SLC40A1 rapid ubiquitination.

The protein resides in the secreted. Liver-produced hormone that constitutes the main circulating regulator of iron absorption and distribution across tissues. Acts by promoting endocytosis and degradation of ferroportin/SLC40A1, leading to the retention of iron in iron-exporting cells and decreased flow of iron into plasma. Controls the major flows of iron into plasma: absorption of dietary iron in the intestine, recycling of iron by macrophages, which phagocytose old erythrocytes and other cells, and mobilization of stored iron from hepatocytes. Its function is as follows. Has strong antimicrobial activity against E.coli ML35P N.cinerea and weaker against S.epidermidis, S.aureus and group b streptococcus bacteria. Active against the fungus C.albicans. No activity against P.aeruginosa. The chain is Hepcidin (HAMP) from Pongo abelii (Sumatran orangutan).